The following is a 530-amino-acid chain: FSD1-like protein (530 aa).

The residue at position 1 (methionine 1) is an N-acetylmethionine. Residues lysine 102–glutamate 141 are a coiled coil. Residues leucine 137–leucine 194 form the COS domain. A Fibronectin type-III domain is found at valine 196 to leucine 300. The 207-residue stretch at leucine 300–alanine 506 folds into the B30.2/SPRY domain. The disordered stretch occupies residues tryptophan 322–arginine 366. Basic and acidic residues predominate over residues glutamine 330–glycine 341. Residues arginine 342–glycine 354 show a composition bias toward polar residues. Serine 520 and serine 523 each carry phosphoserine.

The polypeptide is FSD1-like protein (FSD1L) (Homo sapiens (Human)).